Reading from the N-terminus, the 62-residue chain is MTFLFQLALAALVILSFAMIVGVPVAYASPQNWDSSKRLIFLGSGVWIGLVLVVAALNFLVV.

A run of 2 helical transmembrane segments spans residues Ala-8–Ala-28 and Phe-41–Val-61.

The protein belongs to the PsbZ family. In terms of assembly, PSII is composed of 1 copy each of membrane proteins PsbA, PsbB, PsbC, PsbD, PsbE, PsbF, PsbH, PsbI, PsbJ, PsbK, PsbL, PsbM, PsbT, PsbX, PsbY, PsbZ, Psb30/Ycf12, peripheral proteins PsbO, CyanoQ (PsbQ), PsbU, PsbV and a large number of cofactors. It forms dimeric complexes.

It is found in the cellular thylakoid membrane. Its function is as follows. May control the interaction of photosystem II (PSII) cores with the light-harvesting antenna, regulates electron flow through the 2 photosystem reaction centers. PSII is a light-driven water plastoquinone oxidoreductase, using light energy to abstract electrons from H(2)O, generating a proton gradient subsequently used for ATP formation. This is Photosystem II reaction center protein Z from Cyanothece sp. (strain PCC 7425 / ATCC 29141).